Here is a 351-residue protein sequence, read N- to C-terminus: MKNKKRVLIASSLSCAILLLSAATTQANSAHKDSQDQNKKEHVDKSQQKDKRNVTNKDKNSTVPDDIGKNGKITKRTETVYDEKTNILQNLQFDFIDDPTYDKNVLLVKKQGSIHSNLKFESHKEEKNSNWLKYPSEYHVDFQVKRNRKTEILDQLPKNKISTAKVDSTFSYSSGGKFDSTKGIGRTSSNSYSKTISYNQQNYDTIASGKNNNWHVHWSVIANDLKYGGEVKNRNDELLFYRNTRIATVENPELSFASKYRYPALVRSGFNPEFLTYLSNEKSNEKTQFEVTYTRNQDILKNRPGIHYAPSILEKNKDGQRLIVTYEVDWKNKTVKVVDKYSDDNKPYKEG.

A signal peptide spans 1–27 (MKNKKRVLIASSLSCAILLLSAATTQA). A disordered region spans residues 29–71 (SAHKDSQDQNKKEHVDKSQQKDKRNVTNKDKNSTVPDDIGKNG). Residues 30 to 60 (AHKDSQDQNKKEHVDKSQQKDKRNVTNKDKN) show a composition bias toward basic and acidic residues.

The protein belongs to the aerolysin family.

This is an uncharacterized protein from Staphylococcus aureus (strain Mu50 / ATCC 700699).